A 435-amino-acid polypeptide reads, in one-letter code: Hyaluronidase-1 (435 aa).

A signal peptide spans 1 to 21; that stretch reads MAAHLLPICALFLTLLDMAQG. Cystine bridges form between Cys-43–Cys-333 and Cys-207–Cys-221. Residue Asn-99 is glycosylated (N-linked (GlcNAc...) asparagine). Catalysis depends on Glu-131, which acts as the Proton donor. Residues Asn-216 and Asn-350 are each glycosylated (N-linked (GlcNAc...) asparagine). Positions 354 to 430 constitute an EGF-like domain; it reads GALLCSQALC…YPGWQAPWCE (77 aa). 3 disulfide bridges follow: Cys-358/Cys-369, Cys-363/Cys-418, and Cys-420/Cys-429.

It belongs to the glycosyl hydrolase 56 family. In terms of tissue distribution, highly expressed in the liver, kidney and heart. Weakly expressed in lung, placenta and skeletal muscle. No expression detected in adult brain. Isoform 1 is expressed only in bladder and prostate cancer cells, G2/G3 bladder tumor tissues and lymph node specimens showing tumor invasive tumors cells. Isoform 3, isoform 4, isoform 5 and isoform 6 are expressed in normal bladder and bladder tumor tissues.

The protein resides in the secreted. It localises to the lysosome. It catalyses the reaction Random hydrolysis of (1-&gt;4)-linkages between N-acetyl-beta-D-glucosamine and D-glucuronate residues in hyaluronate.. In terms of biological role, may have a role in promoting tumor progression. May block the TGFB1-enhanced cell growth. The sequence is that of Hyaluronidase-1 (HYAL1) from Homo sapiens (Human).